The sequence spans 632 residues: MPIITLPDGTQKIFEQVVSVTQVAKSIGLSLAKAALAGEVDGQLVDTSFLIKTDANLAIITANDDKGLEIIRHSTAHLLAQATQMLYPKAQVTIGPVIDNGFYYDFVYKDGFSESDLAKIEKNMHKLVKQNLKIERFEMSRNEAIQFFKDKGEYYKTEIIESIPAGQTLSLYKQGNFIDLCRGPHVPLTAKLKAFKLMKLAGAYWRGDSNNEMLQRVYGTAWATKQDLEEHLHRLEEASRRDHRKIGKIQDLFHIQEEAPGMIFWHAKGWTLCQLIEQYMRGIFKDNDYQEVHTPQLIDKSLWEKSGHWEKFGDTMFTTSSENRDYAVKPMNCPAHIQIYNQGLKSYRDLPLRLAEFGSCHRNEPSGTLHGIMRVRNFVQDDGHIFCTPEQIQVEVSTFIDLTFAVYKHFGFDKVDIKLSTRPENHVGSDEVWDKAEAALAEALDAKVIKWEFQKGEGAFYGPKIEFVLKDCLERQWQCGTLQVDFSMPERLDAQFIDENNIKQTPVVLHRAILGSLERFVGILIEHYEGAYPCWLTPIQAVVINISGKQADFVIDITKKLKKQGLRVISDLRNEKIGFKIREHSLQRYPYILIVGDREMEKDQISVRQRGGKDLGVMSIEAFVEKINQEIL.

The TGS domain occupies 1-61 (MPIITLPDGT…KTDANLAIIT (61 aa)). The catalytic stretch occupies residues 242 to 533 (DHRKIGKIQD…LIEHYEGAYP (292 aa)). Residues C333, H384, and H510 each contribute to the Zn(2+) site.

Belongs to the class-II aminoacyl-tRNA synthetase family. Homodimer. The cofactor is Zn(2+).

It localises to the cytoplasm. The catalysed reaction is tRNA(Thr) + L-threonine + ATP = L-threonyl-tRNA(Thr) + AMP + diphosphate + H(+). Catalyzes the attachment of threonine to tRNA(Thr) in a two-step reaction: L-threonine is first activated by ATP to form Thr-AMP and then transferred to the acceptor end of tRNA(Thr). Also edits incorrectly charged L-seryl-tRNA(Thr). The polypeptide is Threonine--tRNA ligase (Ruthia magnifica subsp. Calyptogena magnifica).